Here is a 561-residue protein sequence, read N- to C-terminus: MKESFKVCFCCVRNFKVKSSEPPEEIKNLFHDYSQDDRMSADEMLRFVIQVQGETHADINYVKDIFHRLKHHGVFHPRGIHLEGFYRYLLSDFNSPLPLTREVWQDMNQPLSHYFLYTGHNSYLTGNQLNSNSSIEPIVKALRNGVRVIELDLWPNSSGKEAEVRHGGTLTSREDLQKCLNVVKENAFQVSAYPVVLTLEDHLTPILQKKVAKMVSKTFGGSLFQCTDETTECFPSPESLKNKILISTKPPKEYLQTQISKGSTTDESTRAKKISDAEEQVQEEDEESVAIEYRDLISIHAGNRKGGLKNCLNGDPNRVIRLSMSEQWLETLAKTRGPDLVKFTQRNLLRIFPKTTRFDSSNYDPLVGWIHGAQMVAFNMQSHGRYLWMMQGMFKANGGCGYVKKPDVLLSNGPEGEIFDPCSQNLPIKTTLKVKIYTGEGWNMDFPLDHFDRYSPPDFYAKVGIAGVPLDTASYRTEIDKDEWFPIWDKEFEFPLRVPELSLLCITVKDYDSNTQNDFAGQTCFPLSEVRPGIRAVRLHDRAGEVYKHVRLLMRFVLEPR.

Residues Glu-21–Glu-54 enclose the EF-hand domain. Residues Gln-105–Lys-249 form the PI-PLC X-box domain. Catalysis depends on residues His-120 and His-166. The segment covering Gln-256–Asp-266 has biased composition (polar residues). Residues Gln-256–Asp-285 are disordered. Over residues Glu-267–Asp-276 the composition is skewed to basic and acidic residues. One can recognise a PI-PLC Y-box domain in the interval Arg-294–Leu-410. A C2 domain is found at Pro-414–Asp-541. Residues Asp-452, Asp-458, Asp-510, Asp-512, and Asp-518 each coordinate Ca(2+).

It depends on Ca(2+) as a cofactor. In terms of tissue distribution, expressed in stems, leaves, roots, flowers and siliques. Predominant in the vascular tissues of roots and leaves.

The protein resides in the cell membrane. It catalyses the reaction a 1,2-diacyl-sn-glycero-3-phospho-(1D-myo-inositol-4,5-bisphosphate) + H2O = 1D-myo-inositol 1,4,5-trisphosphate + a 1,2-diacyl-sn-glycerol + H(+). In terms of biological role, the production of the second messenger molecules diacylglycerol (DAG) and inositol 1,4,5-trisphosphate (IP3) is mediated by activated phosphatidylinositol-specific phospholipase C enzymes. Required for secondary responses to abscisic acid signals. This Arabidopsis thaliana (Mouse-ear cress) protein is Phosphoinositide phospholipase C 1 (PLC1).